A 424-amino-acid polypeptide reads, in one-letter code: MAKNIQAIRGMNDYLPGETAIWQRIEGTLKNVLGSYGYSEIRLPIVEQTPLFKRAIGEVTDVVEKEMYTFEDRNGDSLTLRPEGTAGCVRAGIEHGLLYNQEQRLWYIGPMFRHERPQKGRYRQFHQLGAEVFGLQGPDIDAELIMLTARWWRALGISEHVSLELNSIGSLEARANYRDALVAFLEQHQETLDEDCKRRMYTNPLRVLDSKNPDVQALLNDAPALGDYLDDDSREHFAGLCKLLDAAGIAYTVNQRLVRGLDYYNRTVFEWVTNSLGSQGTVCAGGRYDGLVEQLGGRATPAVGFAMGLERLVLLVQAVNPEFIASPVVDIYLVAAGAQTQSAAMTLAERLRDEMPGVKLMTNHGGGNFKKQFARADKWGARIALVLGESEVADGTVVVKDLRSGEQTAVAQDSVAAHLRTLLG.

The protein belongs to the class-II aminoacyl-tRNA synthetase family. In terms of assembly, homodimer.

Its subcellular location is the cytoplasm. It carries out the reaction tRNA(His) + L-histidine + ATP = L-histidyl-tRNA(His) + AMP + diphosphate + H(+). This chain is Histidine--tRNA ligase, found in Salmonella dublin (strain CT_02021853).